The following is a 718-amino-acid chain: Protein Smaug homolog 1 (718 aa).

Ser168 is modified (phosphoserine). Disordered regions lie at residues 278–323 (ARGP…EEGS), 416–474 (KAYS…LQPH), and 572–601 (NRGF…QYQI). The SAM domain maps to 323-391 (SGMKDVPAWL…ERQNLLKSLE (69 aa)). Ser420 bears the Phosphoserine mark. At Thr424 the chain carries Phosphothreonine. A compositionally biased stretch (low complexity) spans 453–466 (GAAATGATATPSAG). Arg573 is modified (omega-N-methylarginine). At Ser580 the chain carries Phosphoserine.

The protein belongs to the SMAUG family.

The protein resides in the cytoplasm. The protein localises to the cell projection. Its subcellular location is the dendrite. It is found in the synapse. It localises to the synaptosome. In terms of biological role, acts as a translational repressor of SRE-containing messengers. The chain is Protein Smaug homolog 1 (SAMD4A) from Homo sapiens (Human).